The chain runs to 389 residues: Pre-mRNA-splicing factor PRP46 (389 aa).

WD repeat units follow at residues 83 to 123, 126 to 165, 173 to 212, 215 to 254, 257 to 298, 308 to 347, and 356 to 389; these read AHQG…LKAV, GHVLGIRSLCISKRHPYLFSGGEDKSLRCWDLERSNSDAG, GHLGGVYSIGLHPELDVLFSGGKDCVVRVWDIRSRVEAMT, GHTNDITSIETDYNDPQVITSSMDGTIRLWDLRKSKTELL, NHSK…NEFG, DNSRIINTLAINPVTNTLFSGYDDGKLEFYNYTTGNLQQS, and PEQSAIYASTFDMSGLRLLTCHGDKSIRIWGTSY.

This sequence belongs to the WD repeat PRL1/PRL2 family. Associated with the spliceosome.

The protein localises to the cytoplasm. The protein resides in the nucleus. Its function is as follows. Involved in pre-mRNA splicing and required for cell cycle progression at G2/M. In Candida albicans (strain SC5314 / ATCC MYA-2876) (Yeast), this protein is Pre-mRNA-splicing factor PRP46 (PRP46).